Here is a 40-residue protein sequence, read N- to C-terminus: Dolichyl-diphosphooligosaccharide--protein glycosyltransferase subunit 4 (40 aa).

Residues 1-4 are Lumenal-facing; the sequence is MITD. A helical transmembrane segment spans residues 5 to 25; the sequence is VQLAIFSNVLGVFLFLLVVAY. At 26 to 40 the chain is on the cytoplasmic side; that stretch reads HYINANTGKIGPKAK.

Belongs to the OST4 family. As to quaternary structure, component of the oligosaccharyltransferase (OST) complex.

It localises to the endoplasmic reticulum membrane. Subunit of the oligosaccharyl transferase (OST) complex that catalyzes the initial transfer of a defined glycan (Glc(3)Man(9)GlcNAc(2) in eukaryotes) from the lipid carrier dolichol-pyrophosphate to an asparagine residue within an Asn-X-Ser/Thr consensus motif in nascent polypeptide chains, the first step in protein N-glycosylation. N-glycosylation occurs cotranslationally and the complex associates with the Sec61 complex at the channel-forming translocon complex that mediates protein translocation across the endoplasmic reticulum (ER). All subunits are required for a maximal enzyme activity. The chain is Dolichyl-diphosphooligosaccharide--protein glycosyltransferase subunit 4 from Drosophila willistoni (Fruit fly).